The sequence spans 858 residues: Chitin synthase 2 (858 aa).

A compositionally biased stretch (basic and acidic residues) spans 1–12; that stretch reads MYPEGPKPEHDQ. The disordered stretch occupies residues 1 to 116; sequence MYPEGPKPEH…GQAPRRQPRR (116 aa). Polar residues predominate over residues 15–24; the sequence is LQDTQFSNQP. Composition is skewed to pro residues over residues 52–68 and 76–89; these read AYPPTQYPTSPPPPNFP and PYPPFNNNPSPVSP. 7 consecutive transmembrane segments (helical) span residues 500-517, 540-560, 586-606, 621-641, 665-685, 799-819, and 825-845; these read RWLNGSFFAGVYALYHWR, TYNLIFSWFALGNFYLTFFIL, LHTVFNYIYIVLIVIQFIMAL, MVFFAILMVYMMFAAIWITVV, NIIISLCATYVMYFVSSFMFL, VLAWIISNLALVVAIANTTVI, and ASIYLGFILWSVAGLSVIRFT.

Belongs to the chitin synthase family.

It is found in the cell membrane. The catalysed reaction is [(1-&gt;4)-N-acetyl-beta-D-glucosaminyl](n) + UDP-N-acetyl-alpha-D-glucosamine = [(1-&gt;4)-N-acetyl-beta-D-glucosaminyl](n+1) + UDP + H(+). In terms of biological role, polymerizes chitin, a structural polymer of the cell wall and septum, by transferring the sugar moiety of UDP-GlcNAc to the non-reducing end of the growing chitin polymer. The chain is Chitin synthase 2 (CHS2) from Rhizopus oligosporus (Rhizopus microsporus var. oligosporus).